The chain runs to 828 residues: Periplasmic nitrate reductase (828 aa).

The segment at residues Met1 to Ala31 is a signal peptide (tat-type signal). The 4Fe-4S Mo/W bis-MGD-type domain maps to Ile39–Asp95. [4Fe-4S] cluster is bound by residues Cys46, Cys49, Cys53, and Cys81. Mo-bis(molybdopterin guanine dinucleotide) is bound by residues Lys83, Gln150, Asn175, Cys179, Trp212–Met219, Ser243–His247, Gln262–Asp264, Met372, Gln376, Asn482, Ser508–Asp509, Lys531, Asp558, and Thr718–Thr727. Phe794 is a substrate binding site. Mo-bis(molybdopterin guanine dinucleotide) is bound by residues Asn802 and Lys819.

The protein belongs to the prokaryotic molybdopterin-containing oxidoreductase family. NasA/NapA/NarB subfamily. Component of the periplasmic nitrate reductase NapAB complex composed of NapA and NapB. [4Fe-4S] cluster is required as a cofactor. It depends on Mo-bis(molybdopterin guanine dinucleotide) as a cofactor. In terms of processing, predicted to be exported by the Tat system. The position of the signal peptide cleavage has not been experimentally proven.

It localises to the periplasm. The catalysed reaction is 2 Fe(II)-[cytochrome] + nitrate + 2 H(+) = 2 Fe(III)-[cytochrome] + nitrite + H2O. Functionally, catalytic subunit of the periplasmic nitrate reductase complex NapAB. Receives electrons from NapB and catalyzes the reduction of nitrate to nitrite. The polypeptide is Periplasmic nitrate reductase (Escherichia coli O81 (strain ED1a)).